A 122-amino-acid chain; its full sequence is Large ribosomal subunit protein uL14 (122 aa).

Belongs to the universal ribosomal protein uL14 family. Part of the 50S ribosomal subunit. Forms a cluster with proteins L3 and L19. In the 70S ribosome, L14 and L19 interact and together make contacts with the 16S rRNA in bridges B5 and B8.

Functionally, binds to 23S rRNA. Forms part of two intersubunit bridges in the 70S ribosome. This is Large ribosomal subunit protein uL14 from Cupriavidus taiwanensis (strain DSM 17343 / BCRC 17206 / CCUG 44338 / CIP 107171 / LMG 19424 / R1) (Ralstonia taiwanensis (strain LMG 19424)).